A 119-amino-acid polypeptide reads, in one-letter code: Immunoglobulin heavy variable 3-72 (119 aa).

Positions M1 to C19 are cleaved as a signal peptide. A framework-1 region spans residues E20–S44. The region spanning E20–R119 is the Ig-like domain. A disulfide bridge links C41 with C117. Residues G45–Y52 form a complementarity-determining-1 region. Residues M53–R69 are framework-2. The segment at T70–T79 is complementarity-determining-2. Residues E80 to C117 are framework-3. The complementarity-determining-3 stretch occupies residues A118–R119.

Immunoglobulins are composed of two identical heavy chains and two identical light chains; disulfide-linked.

Its subcellular location is the secreted. The protein resides in the cell membrane. V region of the variable domain of immunoglobulin heavy chains that participates in the antigen recognition. Immunoglobulins, also known as antibodies, are membrane-bound or secreted glycoproteins produced by B lymphocytes. In the recognition phase of humoral immunity, the membrane-bound immunoglobulins serve as receptors which, upon binding of a specific antigen, trigger the clonal expansion and differentiation of B lymphocytes into immunoglobulins-secreting plasma cells. Secreted immunoglobulins mediate the effector phase of humoral immunity, which results in the elimination of bound antigens. The antigen binding site is formed by the variable domain of one heavy chain, together with that of its associated light chain. Thus, each immunoglobulin has two antigen binding sites with remarkable affinity for a particular antigen. The variable domains are assembled by a process called V-(D)-J rearrangement and can then be subjected to somatic hypermutations which, after exposure to antigen and selection, allow affinity maturation for a particular antigen. The chain is Immunoglobulin heavy variable 3-72 from Homo sapiens (Human).